Consider the following 118-residue polypeptide: MLINFLLVGFGASLGAMLRYGISIFVKSKWKTDFPYATFFINITGSFLLGFLVSTALGPMWQLFLGTGFMGGYTTFSTFKVESMELKWKANFQVLFSYVGLTYLCGLIAAFIGIMLGV.

The next 4 helical transmembrane spans lie at 5-25 (FLLV…ISIF), 39-59 (FFIN…ALGP), 61-81 (WQLF…TFKV), and 98-118 (YVGL…MLGV). Gly71 and Thr74 together coordinate Na(+).

This sequence belongs to the fluoride channel Fluc/FEX (TC 1.A.43) family.

The protein resides in the cell membrane. It carries out the reaction fluoride(in) = fluoride(out). Na(+) is not transported, but it plays an essential structural role and its presence is essential for fluoride channel function. Fluoride-specific ion channel. Important for reducing fluoride concentration in the cell, thus reducing its toxicity. In Listeria innocua serovar 6a (strain ATCC BAA-680 / CLIP 11262), this protein is Fluoride-specific ion channel FluC 1.